We begin with the raw amino-acid sequence, 274 residues long: Receptor-like protein 44 (274 aa).

The N-terminal stretch at 1–24 (MTRSHRLLLLLLLIFQTAQRLTTA) is a signal peptide. Residues 25–223 (DPNDEACLKN…PLQEMMMKSK (199 aa)) are Extracellular-facing. N-linked (GlcNAc...) asparagine glycans are attached at residues N48, N82, and N95. LRR repeat units lie at residues 96 to 121 (CTNLQSLDLSSNQISGVIPPEIQYLV), 123 to 144 (LAVLNLSSNHLSGEITPQLALC), 145 to 168 (AYLNVIDLHDNELSGQIPQQLGLL), and 169 to 192 (ARLSAFDVSNNKLSGQIPTYLSNR). The N-linked (GlcNAc...) asparagine glycan is linked to N127. N-linked (GlcNAc...) asparagine glycosylation is found at N191 and N200. The helical transmembrane segment at 224-244 (GLSVMAIVGIGLGSGIASLMI) threads the bilayer. The Cytoplasmic segment spans residues 245 to 274 (SFTGVCLWLRITEKKIVEEEGKISQSMPDY).

Belongs to the RLP family.

It localises to the cell membrane. In Arabidopsis thaliana (Mouse-ear cress), this protein is Receptor-like protein 44.